Here is a 418-residue protein sequence, read N- to C-terminus: Tyrosine--tRNA ligase (418 aa).

Y34 serves as a coordination point for L-tyrosine. Residues 39 to 48 (PTADSLHLGH) carry the 'HIGH' region motif. 2 residues coordinate L-tyrosine: Y169 and Q173. The 'KMSKS' region motif lies at 229 to 233 (KFGKS). K232 is an ATP binding site. The S4 RNA-binding domain occupies 352-418 (NNIVELLVSS…GKKKYFVLTY (67 aa)).

The protein belongs to the class-I aminoacyl-tRNA synthetase family. TyrS type 1 subfamily. Homodimer.

The protein localises to the cytoplasm. The catalysed reaction is tRNA(Tyr) + L-tyrosine + ATP = L-tyrosyl-tRNA(Tyr) + AMP + diphosphate + H(+). In terms of biological role, catalyzes the attachment of tyrosine to tRNA(Tyr) in a two-step reaction: tyrosine is first activated by ATP to form Tyr-AMP and then transferred to the acceptor end of tRNA(Tyr). The polypeptide is Tyrosine--tRNA ligase (Streptococcus pneumoniae (strain ATCC BAA-255 / R6)).